We begin with the raw amino-acid sequence, 194 residues long: Probable thymidylate kinase (194 aa).

9 to 16 (GIDGVGKS) provides a ligand contact to ATP.

The protein belongs to the thymidylate kinase family.

It catalyses the reaction dTMP + ATP = dTDP + ADP. This is Probable thymidylate kinase from Methanopyrus kandleri (strain AV19 / DSM 6324 / JCM 9639 / NBRC 100938).